The sequence spans 430 residues: Adenylosuccinate synthetase (430 aa).

GTP-binding positions include 12-18 (GDEGKGK) and 40-42 (GHT). Asp-13 acts as the Proton acceptor in catalysis. Mg(2+) contacts are provided by Asp-13 and Gly-40. IMP contacts are provided by residues 13–16 (DEGK), 38–41 (NAGH), Thr-130, Arg-144, Gln-224, Thr-239, and Arg-303. Catalysis depends on His-41, which acts as the Proton donor. 299–305 (TVTGRKR) is a binding site for substrate. Residues Arg-305, 331 to 333 (KLD), and 413 to 415 (STS) contribute to the GTP site.

The protein belongs to the adenylosuccinate synthetase family. In terms of assembly, homodimer. Mg(2+) is required as a cofactor.

It localises to the cytoplasm. The catalysed reaction is IMP + L-aspartate + GTP = N(6)-(1,2-dicarboxyethyl)-AMP + GDP + phosphate + 2 H(+). The protein operates within purine metabolism; AMP biosynthesis via de novo pathway; AMP from IMP: step 1/2. Functionally, plays an important role in the de novo pathway of purine nucleotide biosynthesis. Catalyzes the first committed step in the biosynthesis of AMP from IMP. The polypeptide is Adenylosuccinate synthetase (Cereibacter sphaeroides (strain ATCC 17025 / ATH 2.4.3) (Rhodobacter sphaeroides)).